A 461-amino-acid polypeptide reads, in one-letter code: Diacylglycerol O-acyltransferase 1 (461 aa).

The disordered stretch occupies residues 1-38 (MQDSMDDSLREAEGRQDDSEVSSGTTLGSSTPEDSGVT). At 1-112 (MQDSMDDSLR…TLVVAWHTSS (112 aa)) the chain is on the cytoplasmic side. The segment covering 7 to 18 (DSLREAEGRQDD) has biased composition (basic and acidic residues). The span at 21–33 (VSSGTTLGSSTPE) shows a compositional bias: polar residues. The helical transmembrane segment at 113-133 (FIYMTVLVLFLAANPLMWWFM) threads the bilayer. Residues 134-230 (VPYMVYYVWN…ARPQVATGPR (97 aa)) lie on the Lumenal side of the membrane. Residues 231-251 (YIFGYHPHGVGALGAFGAIAT) form a helical membrane-spanning segment. Over 252-258 (EGCNWSK) the chain is Cytoplasmic. Residues 259-279 (VFAGIPACLCTLVNQFQIPIY) form a helical membrane-spanning segment. Over 280-332 (RDYLLGLGCTSVARKNVLKVLEQNYSVCIVVGGAQEALLSRVGSTELVLNKRK) the chain is Lumenal. A helical membrane pass occupies residues 333–353 (GFIKLALETGNVNLVPIYAFG). The Cytoplasmic portion of the chain corresponds to 354 to 461 (ETDCFNVLDT…YAGKELKIVE (108 aa)).

Belongs to the diacylglycerol acyltransferase family.

Its subcellular location is the lipid droplet. It is found in the endoplasmic reticulum membrane. It catalyses the reaction an acyl-CoA + a 1,2-diacyl-sn-glycerol = a triacyl-sn-glycerol + CoA. The catalysed reaction is a 2-acylglycerol + an acyl-CoA = a 1,2-diacyl-sn-glycerol + CoA. It functions in the pathway glycerolipid metabolism; triacylglycerol biosynthesis. Catalyzes the terminal and only committed step in triacylglycerol (TAG) synthesis by using diacylglycerol (DAG) and fatty acyl-CoA as substrates. Required for storage lipid synthesis. Major DAG esterifying enzyme in stationary phase when TAG production is particularly active. Involved in lipid particle synthesis from the endoplasmic reticulum, promoting localized TAG production at discrete ER subdomains. In Eremothecium gossypii (strain ATCC 10895 / CBS 109.51 / FGSC 9923 / NRRL Y-1056) (Yeast), this protein is Diacylglycerol O-acyltransferase 1 (DGA1).